The sequence spans 249 residues: DNA polymerase sliding clamp (249 aa).

It belongs to the PCNA family. As to quaternary structure, homotrimer which circularizes head-to-tail (head is a N-terminus, tail is at C-terminus) to form a toroid. RFC opens the toroid so it can load on DNA. Interacts with both Pol I (pol) and Pol II (polB-polC), with Hel308 (hjm) and with Hjc. Interaction with the C-terminal PIP-box of RfcL may stabilize the toroidal structure.

Its function is as follows. Sliding clamp subunit that acts as a moving platform for DNA processing. Responsible for tethering the catalytic subunit of DNA polymerase to DNA during high-speed replication. Unlike its eukaryotic paralog, loads on circular DNA without the replication factor C (RFC) clamp loader, although RFC greatly increases loading efficiency. Stimulates the ATPase activity of replication factor C (RFC) in the presence of ssDNA. Stimulates the helicase activity of Hel308 and may alter its substrate specificity. This chain is DNA polymerase sliding clamp, found in Pyrococcus furiosus (strain ATCC 43587 / DSM 3638 / JCM 8422 / Vc1).